A 203-amino-acid chain; its full sequence is Holliday junction branch migration complex subunit RuvA (203 aa).

Residues 1–64 (MIGRLRGIIL…EDAQLLYGFN (64 aa)) are domain I. Residues 65-142 (NKQERTLFKE…KGLHGDLFTP (78 aa)) form a domain II region. Positions 143 to 154 (AADLVLTSPAGP) are flexible linker. The interval 155 to 203 (TADDAEQEAVAALVALGYKPQEASRMVSKIARPDANSETLIREALRAAL) is domain III.

Belongs to the RuvA family. Homotetramer. Forms an RuvA(8)-RuvB(12)-Holliday junction (HJ) complex. HJ DNA is sandwiched between 2 RuvA tetramers; dsDNA enters through RuvA and exits via RuvB. An RuvB hexamer assembles on each DNA strand where it exits the tetramer. Each RuvB hexamer is contacted by two RuvA subunits (via domain III) on 2 adjacent RuvB subunits; this complex drives branch migration. In the full resolvosome a probable DNA-RuvA(4)-RuvB(12)-RuvC(2) complex forms which resolves the HJ.

It localises to the cytoplasm. In terms of biological role, the RuvA-RuvB-RuvC complex processes Holliday junction (HJ) DNA during genetic recombination and DNA repair, while the RuvA-RuvB complex plays an important role in the rescue of blocked DNA replication forks via replication fork reversal (RFR). RuvA specifically binds to HJ cruciform DNA, conferring on it an open structure. The RuvB hexamer acts as an ATP-dependent pump, pulling dsDNA into and through the RuvAB complex. HJ branch migration allows RuvC to scan DNA until it finds its consensus sequence, where it cleaves and resolves the cruciform DNA. This Klebsiella pneumoniae (strain 342) protein is Holliday junction branch migration complex subunit RuvA.